Reading from the N-terminus, the 1019-residue chain is Alpha-mannosidase At3g26720 (1019 aa).

A signal peptide spans 1-22 (MAVKCFSLYLILAAIVIGGVTS). Residues histidine 47 and aspartate 49 each coordinate Zn(2+). A glycan (N-linked (GlcNAc...) asparagine) is linked at asparagine 64. Aspartate 169 contributes to the Zn(2+) binding site. Residues asparagine 278 and asparagine 336 are each glycosylated (N-linked (GlcNAc...) asparagine). Residue histidine 410 participates in Zn(2+) binding. Cysteine 466 and cysteine 474 are disulfide-bonded. Asparagine 470, asparagine 638, asparagine 730, and asparagine 820 each carry an N-linked (GlcNAc...) asparagine glycan. Residues cysteine 824 and cysteine 829 are joined by a disulfide bond.

It belongs to the glycosyl hydrolase 38 family. As to quaternary structure, homodimer. It depends on Zn(2+) as a cofactor.

The enzyme catalyses Hydrolysis of terminal, non-reducing alpha-D-mannose residues in alpha-D-mannosides.. Liberates mannose from p-nitrophenyl-alpha-D-mannoside in vitro. The sequence is that of Alpha-mannosidase At3g26720 from Arabidopsis thaliana (Mouse-ear cress).